The sequence spans 388 residues: MKTLIAAYSGVLRGERRAEAARSENKNKGSALSREGSGRWGTGSSILSALQDIFSVTWLNRSKVEKQLQVISVLQWVLSFLVLGVACSVILMYTFCTDCWLIAVLYFTWLAFDWNTPKKGGRRSQWVRNWAVWRYFRDYFPIQLVKTHNLLTTRNYIFGYHPHGIMGLGAFCNFSTEATEVSKKFPGIRPYLATLAGNFRMPVLREYLMSGGICPVNRDTIDYLLSKNGSGNAIIIVVGGAAESLSSMPGKNAVTLKNRKGFVKLALRHGADLVPTYSFGENEVYKQVIFEEGSWGRWVQKKFQKYIGFAPCIFHGRGLFSSDTWGLVPYSKPITTVVGEPITVPKLEHPTQKDIDLYHAMYMEALVKLFDNHKTKFGLPETEVLEVN.

Topologically, residues 1–69 (MKTLIAAYSG…NRSKVEKQLQ (69 aa)) are cytoplasmic. Residues 70–88 (VISVLQWVLSFLVLGVACS) traverse the membrane as a helical segment. The Lumenal segment spans residues 89–92 (VILM). Residues 93–112 (YTFCTDCWLIAVLYFTWLAF) form a helical membrane-spanning segment. The Cytoplasmic segment spans residues 113 to 388 (DWNTPKKGGR…LPETEVLEVN (276 aa)).

The protein belongs to the diacylglycerol acyltransferase family. As to quaternary structure, forms multimeric complexes consisting of several DGAT2 subunits. Interacts with SLC27A1 and this interaction is enhanced in the presence of ZFYVE1. Predominantly expressed in liver. Also expressed in testis.

The protein localises to the endoplasmic reticulum membrane. The protein resides in the lipid droplet. It localises to the cytoplasm. It is found in the perinuclear region. It catalyses the reaction an acyl-CoA + a 1,2-diacyl-sn-glycerol = a triacyl-sn-glycerol + CoA. The enzyme catalyses all-trans-retinol + an acyl-CoA = an all-trans-retinyl ester + CoA. It carries out the reaction 1,2-di-(9Z-octadecenoyl)-sn-glycerol + hexadecanoyl-CoA = 1,2-di-(9Z)-octadecenoyl-3-hexadecanoyl-sn-glycerol + CoA. The catalysed reaction is 1,2-di-(9Z-octadecenoyl)-sn-glycerol + (9Z)-octadecenoyl-CoA = 1,2,3-tri-(9Z-octadecenoyl)-glycerol + CoA. It catalyses the reaction 1,3-di-(9Z-octadecenoyl)-glycerol + (9Z)-octadecenoyl-CoA = 1,2,3-tri-(9Z-octadecenoyl)-glycerol + CoA. The enzyme catalyses 2,3-di-(9Z)-octadecenoyl-sn-glycerol + (9Z)-octadecenoyl-CoA = 1,2,3-tri-(9Z-octadecenoyl)-glycerol + CoA. It carries out the reaction 2-(9Z-octadecenoyl)-glycerol + hexadecanoyl-CoA = 1-hexadecanoyl-2-(9Z-octadecenoyl)-sn-glycerol + CoA. The catalysed reaction is 2-(9Z-octadecenoyl)-glycerol + (9Z)-octadecenoyl-CoA = 1,2-di-(9Z-octadecenoyl)-sn-glycerol + CoA. It catalyses the reaction all-trans-retinol + hexadecanoyl-CoA = all-trans-retinyl hexadecanoate + CoA. The enzyme catalyses 1-O-(9Z-octadecenyl)-glycerol + (9Z)-octadecenoyl-CoA = 1-O-(9Z-octadecyl)-3-(9Z-octadecenoyl)-glycerol + CoA. It carries out the reaction 1-(9Z-octadecenoyl)-glycerol + (9Z)-octadecenoyl-CoA = 1,2-di-(9Z-octadecenoyl)-glycerol + CoA. Its pathway is glycerolipid metabolism; triacylglycerol biosynthesis. Its activity is regulated as follows. Inhibited by niacin. Functionally, essential acyltransferase that catalyzes the terminal and only committed step in triacylglycerol synthesis by using diacylglycerol and fatty acyl CoA as substrates. Required for synthesis and storage of intracellular triglycerides. Probably plays a central role in cytosolic lipid accumulation. In liver, is primarily responsible for incorporating endogenously synthesized fatty acids into triglycerides. Also functions as an acyl-CoA retinol acyltransferase (ARAT). Also able to use 1-monoalkylglycerol (1-MAkG) as an acyl acceptor for the synthesis of monoalkyl-monoacylglycerol (MAMAG). In Mus musculus (Mouse), this protein is Diacylglycerol O-acyltransferase 2.